A 537-amino-acid polypeptide reads, in one-letter code: Beta-hexosaminidase subunit beta (537 aa).

An N-terminal signal peptide occupies residues 1–23 (MPGSPRRAPGLLLQALVAMVSLA). An N-linked (GlcNAc...) asparagine glycan is attached at asparagine 62. An intrachain disulfide couples cysteine 69 to cysteine 115. 2 N-linked (GlcNAc...) asparagine glycosylation sites follow: asparagine 168 and asparagine 305. 2 cysteine pairs are disulfide-bonded: cysteine 287/cysteine 338 and cysteine 512/cysteine 529. Catalysis depends on glutamate 333, which acts as the Proton donor.

The protein belongs to the glycosyl hydrolase 20 family. In terms of assembly, there are 3 forms of beta-hexosaminidase: hexosaminidase A is a heterodimer composed of one subunit alpha and one subunit beta (chain A and B); hexosaminidase B is a homodimer of two beta subunits (two chains A and B); hexosaminidase S is a homodimer of two alpha subunits. The composition of the dimer (isozyme A versus isozyme S) has a significant effect on the substrate specificity of the alpha subunit active site.

It localises to the lysosome. The protein resides in the cytoplasmic vesicle. The protein localises to the secretory vesicle. It is found in the cortical granule. The enzyme catalyses Hydrolysis of terminal non-reducing N-acetyl-D-hexosamine residues in N-acetyl-beta-D-hexosaminides.. It carries out the reaction N-acetyl-beta-D-galactosaminyl-(1-&gt;4)-beta-D-3-sulfogalactosyl-(1-&gt;4)-beta-D-glucosyl-(1&lt;-&gt;1')-ceramide + H2O = a beta-D-3-sulfogalactosyl-(1-&gt;4)-beta-D-glucosyl-(1&lt;-&gt;1')-ceramide + N-acetyl-beta-D-galactosamine. The catalysed reaction is a ganglioside GM2 (d18:1(4E)) + H2O = a ganglioside GM3 (d18:1(4E)) + N-acetyl-beta-D-galactosamine. It catalyses the reaction a ganglioside GM2 + H2O = a ganglioside GM3 + N-acetyl-beta-D-galactosamine. The enzyme catalyses beta-D-GalNAc-(1-&gt;4)-alpha-L-IdoA-(1-&gt;3)-beta-D-GalNAc-4-sulfate-(1-&gt;4)-alpha-L-IdoA-(1-&gt;3)-D-GalNAc-4-sulfate + H2O = alpha-L-IdoA-(1-&gt;3)-beta-D-GalNAc-4-sulfate-(1-&gt;4)-alpha-L-IdoA-(1-&gt;3)-D-GalNAc-4-sulfate + N-acetyl-D-galactosamine. It carries out the reaction N-acetyl-beta-D-6-sulfogalactosaminyl-(1-&gt;4)-alpha-L-iduronyl-(1-&gt;3)-N-acetyl-D-6-sulfogalactosamine + H2O = alpha-L-iduronyl-(1-&gt;3)-N-acetyl-D-6-sulfogalactosamine + N-acetyl-D-6-sulfogalactosamine. With respect to regulation, addition of GM2A stimulates the hydrolysis of sulfated glycosphingolipid SM2 and the ganglioside GM2. Functionally, hydrolyzes the non-reducing end N-acetyl-D-hexosamine and/or sulfated N-acetyl-D-hexosamine of glycoconjugates, such as the oligosaccharide moieties from proteins and neutral glycolipids, or from certain mucopolysaccharides. The isozyme B does not hydrolyze each of these substrates, however hydrolyzes efficiently neutral oligosaccharide. Only the isozyme A is responsible for the degradation of GM2 gangliosides in the presence of GM2A. During fertilization is responsible, at least in part, for the zona block to polyspermy. Present in the cortical granules of non-activated oocytes, is exocytosed during the cortical reaction in response to oocyte activation and inactivates the sperm galactosyltransferase-binding site, accounting for the block in sperm binding to the zona pellucida. The protein is Beta-hexosaminidase subunit beta of Rattus norvegicus (Rat).